A 92-amino-acid polypeptide reads, in one-letter code: Large ribosomal subunit protein bL36m (92 aa).

The transit peptide at 1 to 54 (MASLGRKFFAVGVLSRVFPSAFNAQKGLLKNASMFLTPAFRLSPSLLPWNFSRG) directs the protein to the mitochondrion.

Belongs to the bacterial ribosomal protein bL36 family. As to quaternary structure, component of the mitochondrial large ribosomal subunit (mt-LSU). Mature yeast 74S mitochondrial ribosomes consist of a small (37S) and a large (54S) subunit. The 37S small subunit contains a 15S ribosomal RNA (15S mt-rRNA) and at least 32 different proteins. The 54S large subunit contains a 21S rRNA (21S mt-rRNA) and at least 45 different proteins. bL36m has a zinc binding site.

Its subcellular location is the mitochondrion. Functionally, component of the mitochondrial ribosome (mitoribosome), a dedicated translation machinery responsible for the synthesis of mitochondrial genome-encoded proteins, including at least some of the essential transmembrane subunits of the mitochondrial respiratory chain. The mitoribosomes are attached to the mitochondrial inner membrane and translation products are cotranslationally integrated into the membrane. bL36m may be involved in a process influencing telomere capping. The polypeptide is Large ribosomal subunit protein bL36m (rtc6) (Schizosaccharomyces pombe (strain 972 / ATCC 24843) (Fission yeast)).